A 728-amino-acid polypeptide reads, in one-letter code: 1,4-alpha-glucan branching enzyme GlgB (728 aa).

Residue Asp-405 is the Nucleophile of the active site. Residue Glu-458 is the Proton donor of the active site.

It belongs to the glycosyl hydrolase 13 family. GlgB subfamily. In terms of assembly, monomer.

The enzyme catalyses Transfers a segment of a (1-&gt;4)-alpha-D-glucan chain to a primary hydroxy group in a similar glucan chain.. It participates in glycan biosynthesis; glycogen biosynthesis. In terms of biological role, catalyzes the formation of the alpha-1,6-glucosidic linkages in glycogen by scission of a 1,4-alpha-linked oligosaccharide from growing alpha-1,4-glucan chains and the subsequent attachment of the oligosaccharide to the alpha-1,6 position. The protein is 1,4-alpha-glucan branching enzyme GlgB of Escherichia coli O157:H7.